The sequence spans 513 residues: Putative thymidine phosphorylase 2 (513 aa).

It belongs to the thymidine/pyrimidine-nucleoside phosphorylase family. Type 2 subfamily.

The catalysed reaction is thymidine + phosphate = 2-deoxy-alpha-D-ribose 1-phosphate + thymine. The sequence is that of Putative thymidine phosphorylase 2 from Acidovorax sp. (strain JS42).